We begin with the raw amino-acid sequence, 306 residues long: Probable cobalamin biosynthesis protein CobD (306 aa).

6 helical membrane passes run 17–37 (IGEP…IIFF), 54–74 (LFGF…AYEI), 88–108 (ISLY…IEFS), 155–175 (ITDS…PGAF), 207–227 (ILNF…APFY), and 286–306 (SLKA…VLLM).

The protein belongs to the CobD/CbiB family.

The protein resides in the cell membrane. The protein operates within cofactor biosynthesis; adenosylcobalamin biosynthesis. Its function is as follows. Converts cobyric acid to cobinamide by the addition of aminopropanol on the F carboxylic group. The sequence is that of Probable cobalamin biosynthesis protein CobD from Methanococcus maripaludis (strain C5 / ATCC BAA-1333).